Here is a 315-residue protein sequence, read N- to C-terminus: tRNA wybutosine-synthesizing protein 5 (315 aa).

The JmjC domain maps to 102–267 (DEKYYLRSLG…YDKTDTYGNK (166 aa)). A 2-oxoglutarate-binding site is contributed by Tyr106. Fe cation-binding residues include His160 and Asp162. 2-oxoglutarate is bound by residues Asn166 and Lys175. Residue His235 coordinates Fe cation.

The protein belongs to the TYW5 family. As to quaternary structure, homodimer. Fe(2+) serves as cofactor.

The catalysed reaction is 7-[(3S)-3-amino-3-carboxypropyl]wyosine(37) in tRNA(Phe) + 2-oxoglutarate + O2 = 7-(2-hydroxy-3-amino-3-carboxypropyl)wyosine(37) in tRNA(Phe) + succinate + CO2. Its pathway is tRNA modification; wybutosine-tRNA(Phe) biosynthesis. In terms of biological role, tRNA hydroxylase that acts as a component of the wybutosine biosynthesis pathway. Wybutosine is a hyper modified guanosine with a tricyclic base found at the 3'-position adjacent to the anticodon of eukaryotic phenylalanine tRNA. Catalyzes the hydroxylation of 7-(a-amino-a-carboxypropyl)wyosine (yW-72) into undermodified hydroxywybutosine (OHyW*). OHyW* being further transformed into hydroxywybutosine (OHyW) by LCMT2/TYW4. OHyW is a derivative of wybutosine found in higher eukaryotes. This chain is tRNA wybutosine-synthesizing protein 5 (TYW5), found in Homo sapiens (Human).